The chain runs to 407 residues: Phosphopentomutase (407 aa).

Mn(2+)-binding residues include Asp10, Asp306, His311, Asp347, His348, and His359.

Belongs to the phosphopentomutase family. Requires Mn(2+) as cofactor.

The protein localises to the cytoplasm. It carries out the reaction 2-deoxy-alpha-D-ribose 1-phosphate = 2-deoxy-D-ribose 5-phosphate. It catalyses the reaction alpha-D-ribose 1-phosphate = D-ribose 5-phosphate. The protein operates within carbohydrate degradation; 2-deoxy-D-ribose 1-phosphate degradation; D-glyceraldehyde 3-phosphate and acetaldehyde from 2-deoxy-alpha-D-ribose 1-phosphate: step 1/2. Functionally, isomerase that catalyzes the conversion of deoxy-ribose 1-phosphate (dRib-1-P) and ribose 1-phosphate (Rib-1-P) to deoxy-ribose 5-phosphate (dRib-5-P) and ribose 5-phosphate (Rib-5-P), respectively. The protein is Phosphopentomutase of Buchnera aphidicola subsp. Acyrthosiphon pisum (strain Tuc7).